The primary structure comprises 73 residues: UPF0346 protein Lreu_0775 (73 aa).

This sequence belongs to the UPF0346 family.

In Limosilactobacillus reuteri (strain DSM 20016) (Lactobacillus reuteri), this protein is UPF0346 protein Lreu_0775.